A 341-amino-acid chain; its full sequence is Anthranilate phosphoribosyltransferase (341 aa).

5-phospho-alpha-D-ribose 1-diphosphate is bound by residues G84, G87–D88, T92, N94–T97, K112–S120, and S124. G84 is a binding site for anthranilate. Residue S96 coordinates Mg(2+). Residue N115 participates in anthranilate binding. R170 is a binding site for anthranilate. Residues D229 and E230 each contribute to the Mg(2+) site.

The protein belongs to the anthranilate phosphoribosyltransferase family. Homodimer. Mg(2+) serves as cofactor.

The catalysed reaction is N-(5-phospho-beta-D-ribosyl)anthranilate + diphosphate = 5-phospho-alpha-D-ribose 1-diphosphate + anthranilate. It participates in amino-acid biosynthesis; L-tryptophan biosynthesis; L-tryptophan from chorismate: step 2/5. Functionally, catalyzes the transfer of the phosphoribosyl group of 5-phosphorylribose-1-pyrophosphate (PRPP) to anthranilate to yield N-(5'-phosphoribosyl)-anthranilate (PRA). This chain is Anthranilate phosphoribosyltransferase, found in Polynucleobacter asymbioticus (strain DSM 18221 / CIP 109841 / QLW-P1DMWA-1) (Polynucleobacter necessarius subsp. asymbioticus).